A 200-amino-acid polypeptide reads, in one-letter code: Pyrrolidone-carboxylate peptidase (200 aa).

Catalysis depends on residues Glu-78, Cys-141, and His-165.

It belongs to the peptidase C15 family. Homotetramer.

The protein resides in the cytoplasm. The enzyme catalyses Release of an N-terminal pyroglutamyl group from a polypeptide, the second amino acid generally not being Pro.. Functionally, removes 5-oxoproline from various penultimate amino acid residues except L-proline. This chain is Pyrrolidone-carboxylate peptidase, found in Lactobacillus acidophilus (strain ATCC 700396 / NCK56 / N2 / NCFM).